The sequence spans 110 residues: Large ribosomal subunit protein uL22 (110 aa).

It belongs to the universal ribosomal protein uL22 family. Part of the 50S ribosomal subunit.

Its function is as follows. This protein binds specifically to 23S rRNA; its binding is stimulated by other ribosomal proteins, e.g. L4, L17, and L20. It is important during the early stages of 50S assembly. It makes multiple contacts with different domains of the 23S rRNA in the assembled 50S subunit and ribosome. Functionally, the globular domain of the protein is located near the polypeptide exit tunnel on the outside of the subunit, while an extended beta-hairpin is found that lines the wall of the exit tunnel in the center of the 70S ribosome. In Marinomonas sp. (strain MWYL1), this protein is Large ribosomal subunit protein uL22.